The primary structure comprises 379 residues: DnaJ homolog subfamily B member 14 (379 aa).

Over 1–244 the chain is Cytoplasmic; that stretch reads MEGNRDEAEK…GHEREEERAD (244 aa). Residues 56–90 are disordered; sequence TAGSSTHCRKPPGSSDQSKPSCGKDGTSGAGEGGK. The 65-residue stretch at 108–172 folds into the J domain; that stretch reads NYYEVLGVTK…EKRKQYDLTG (65 aa). Residues 245-265 form a helical membrane-spanning segment; the sequence is GGFSVFIQLMPIIVLILVSLL. Residues 266–379 are Lumenal-facing; sequence SQLMVSNPPY…ERLTSLYKGG (114 aa).

It belongs to the DnaJ family. DNAJB12/DNAJB14 subfamily. In terms of assembly, interacts (via J domain) with HSPA8/Hsc70. Forms a multiprotein complex, at least composed of DNAJB12, DNAJB14, HSPA8/Hsc70 and SGTA; interaction with DNAJB14 and HSPA8/Hsc70 is direct.

Its subcellular location is the endoplasmic reticulum membrane. The protein localises to the nucleus membrane. In terms of biological role, acts as a co-chaperone with HSPA8/Hsc70; required to promote protein folding and trafficking, prevent aggregation of client proteins, and promote unfolded proteins to endoplasmic reticulum-associated degradation (ERAD) pathway. Acts by determining HSPA8/Hsc70's ATPase and polypeptide-binding activities. Can also act independently of HSPA8/Hsc70: together with DNAJB12, acts as a chaperone that promotes maturation of potassium channels KCND2 and KCNH2 by stabilizing nascent channel subunits and assembling them into tetramers. While stabilization of nascent channel proteins is dependent on HSPA8/Hsc70, the process of oligomerization of channel subunits is independent of HSPA8/Hsc70. When overexpressed, forms membranous structures together with DNAJB12 and HSPA8/Hsc70 within the nucleus; the role of these structures, named DJANGOs, is still unclear. This Mus musculus (Mouse) protein is DnaJ homolog subfamily B member 14.